The primary structure comprises 381 residues: Lysophosphatidylserine lipase ABHD12 (381 aa).

Topologically, residues 1-58 (MRKRNESVTVEHERAAAAPAPLDKGCSLRHSLRLPAADTGMKRPLGRRHGLWFRLRRL) are cytoplasmic. Residues 59–79 (IIWLLGVYIAIPFLVKLCPAI) form a helical membrane-spanning segment. Residues 80 to 381 (QAKLVFLNFV…LGIPEHEHHH (302 aa)) are Extracellular-facing. An N-linked (GlcNAc...) asparagine glycan is attached at Asn106. Ser229 (nucleophile) is an active-site residue. Residues Asp316 and His355 each act as charge relay system in the active site.

It belongs to the serine esterase family.

Its subcellular location is the endoplasmic reticulum membrane. It catalyses the reaction 1-(9Z-octadecenoyl)-sn-glycero-3-phospho-L-serine + H2O = sn-glycero-3-phospho-L-serine + (9Z)-octadecenoate + H(+). It carries out the reaction 1-(9Z-octadecenoyl)-sn-glycero-3-phospho-(1'-sn-glycerol) + H2O = sn-glycero-3-phospho-(1'-sn-glycerol) + (9Z)-octadecenoate + H(+). The enzyme catalyses 1-(9Z-octadecenoyl)-sn-glycero-3-phospho-(1D-myo-inositol) + H2O = sn-glycero-3-phospho-1D-myo-inositol + (9Z)-octadecenoate + H(+). The catalysed reaction is 1-(9Z-octadecenoyl)-sn-glycero-3-phosphoethanolamine + H2O = sn-glycero-3-phosphoethanolamine + (9Z)-octadecenoate + H(+). It catalyses the reaction 1-(9Z-octadecenoyl)-sn-glycero-3-phosphocholine + H2O = 1-(9Z-octadecenoyl)-sn-glycerol + phosphocholine + H(+). It carries out the reaction 2-(9Z-octadecenoyl)-glycerol + H2O = glycerol + (9Z)-octadecenoate + H(+). The enzyme catalyses 1-hexadecanoyl-sn-glycero-3-phospho-L-serine + H2O = sn-glycero-3-phospho-L-serine + hexadecanoate + H(+). The catalysed reaction is 2-(5Z,8Z,11Z,14Z-eicosatetraenoyl)-glycerol + H2O = glycerol + (5Z,8Z,11Z,14Z)-eicosatetraenoate + H(+). It catalyses the reaction Hydrolyzes glycerol monoesters of long-chain fatty acids.. It carries out the reaction 1-decanoylglycerol + H2O = decanoate + glycerol + H(+). The enzyme catalyses 1-dodecanoylglycerol + H2O = dodecanoate + glycerol + H(+). The catalysed reaction is 1-tetradecanoylglycerol + H2O = tetradecanoate + glycerol + H(+). It catalyses the reaction 2-hexadecanoylglycerol + H2O = glycerol + hexadecanoate + H(+). It carries out the reaction 1-(9Z-octadecenoyl)-glycerol + H2O = glycerol + (9Z)-octadecenoate + H(+). The enzyme catalyses 2-(9Z,12Z-octadecadienoyl)-glycerol + H2O = (9Z,12Z)-octadecadienoate + glycerol + H(+). The catalysed reaction is 1-(5Z,8Z,11Z,14Z-eicosatetraenoyl)-glycerol + H2O = glycerol + (5Z,8Z,11Z,14Z)-eicosatetraenoate + H(+). It catalyses the reaction 1-(9Z,12Z-octadecadienoyl)-glycerol + H2O = (9Z,12Z)-octadecadienoate + glycerol + H(+). It carries out the reaction 1-hexadecanoylglycerol + H2O = glycerol + hexadecanoate + H(+). The enzyme catalyses 1-octadecanoylglycerol + H2O = octadecanoate + glycerol + H(+). The catalysed reaction is 1-octadecanoyl-2-(9,10-epoxyoctadecanoyl)-sn-glycero-3-phospho-L-serine + H2O = 9,10-epoxyoctadecanoate + 1-octadecanoyl-sn-glycero-3-phosphoserine + H(+). It catalyses the reaction 1-octadecanoyl-2-(10-hydroxyoctadecanoyl)-sn-glycero-3-phospho-L-serine + H2O = 1-octadecanoyl-sn-glycero-3-phosphoserine + 10-hydroxyoctadecanoate + H(+). It carries out the reaction 1-hexadecanoyl-2-(10-hydroxyoctadecanoyl)-sn-glycero-3-phospho-L-serine + H2O = 10-hydroxyoctadecanoate + 1-hexadecanoyl-sn-glycero-3-phospho-L-serine + H(+). Lysophosphatidylserine (LPS) lipase that mediates the hydrolysis of lysophosphatidylserine, a class of signaling lipids that regulates immunological and neurological processes. Represents a major lysophosphatidylserine lipase in the brain, thereby playing a key role in the central nervous system. Also able to hydrolyze oxidized phosphatidylserine; oxidized phosphatidylserine is produced in response to severe inflammatory stress and constitutes a proapoptotic 'eat me' signal. Also has monoacylglycerol (MAG) lipase activity: hydrolyzes 2-arachidonoylglycerol (2-AG), thereby acting as a regulator of endocannabinoid signaling pathways. Has a strong preference for very-long-chain lipid substrates; substrate specificity is likely due to improved catalysis and not improved substrate binding. This chain is Lysophosphatidylserine lipase ABHD12, found in Gallus gallus (Chicken).